A 187-amino-acid chain; its full sequence is Large ribosomal subunit protein uL6 (187 aa).

It belongs to the universal ribosomal protein uL6 family. In terms of assembly, part of the 50S ribosomal subunit.

Functionally, this protein binds to the 23S rRNA, and is important in its secondary structure. It is located near the subunit interface in the base of the L7/L12 stalk, and near the tRNA binding site of the peptidyltransferase center. The polypeptide is Large ribosomal subunit protein uL6 (Roseiflexus castenholzii (strain DSM 13941 / HLO8)).